Here is a 599-residue protein sequence, read N- to C-terminus: Peptidyl-Asp metalloendopeptidase (599 aa).

A signal peptide spans 1-20 (MKKSLLCSTLALAVASAAQA). A Zn(2+)-binding site is contributed by His164. The active site involves Glu165. Positions 168 and 174 each coordinate Zn(2+). Residues 265 to 285 (PTKVPGTVNPGSGGDTPTPPD) are disordered. The region spanning 458 to 583 (YDFESGIGGW…KRAELMILSG (126 aa)) is the CBM-cenC domain.

It belongs to the peptidase M72 family. In terms of assembly, interacts with BamI, the product of its coregulated adjacent gene, which inhibits its protease activity. Zn(2+) serves as cofactor. Made as a membrane-associated pre-pro-protein, which is exported to the periplasm with removal of the signal peptide, leading to a protein with a molecular mass of 65 kDa, that likely contains the metzincin domain plus tandem carbohydrate-binding domains. Undergoes processing during export to the extracellular milieu, probably by autocatalysis, yielding a (mature length) 25 kDa protein that most likely corresponds to the metzincin domain only.

The protein localises to the secreted. It carries out the reaction Cleavage of Xaa-|-Asp, Xaa-|-Glu and Xaa-|-cysteic acid bonds.. Its activity is regulated as follows. Is inhibited by BamI, the product of its coregulated adjacent gene. Metalloprotease with endopeptidase activity. Specifically cleaves on the N-terminal side of aspartyl, glutamyl and cysteic acid residues. Mep72 appears to be a secreted biofilm-specific regulator that affects the processing of a very specific subset of virulence factors exported by the type III secretion machinery as well as flagellar proteins. Binds directly to ExoS and PcrV and affects the processing of these proteins in the biofilm secretome, but contrary to expectation, Mep72 seems to protect these targets against proteolytic processing/degradation. The protein is Peptidyl-Asp metalloendopeptidase of Pseudomonas aeruginosa (strain ATCC 15692 / DSM 22644 / CIP 104116 / JCM 14847 / LMG 12228 / 1C / PRS 101 / PAO1).